The sequence spans 172 residues: Adenine phosphoribosyltransferase (172 aa).

This sequence belongs to the purine/pyrimidine phosphoribosyltransferase family. In terms of assembly, homodimer.

It localises to the cytoplasm. It catalyses the reaction AMP + diphosphate = 5-phospho-alpha-D-ribose 1-diphosphate + adenine. Its pathway is purine metabolism; AMP biosynthesis via salvage pathway; AMP from adenine: step 1/1. Functionally, catalyzes a salvage reaction resulting in the formation of AMP, that is energically less costly than de novo synthesis. The polypeptide is Adenine phosphoribosyltransferase (Exiguobacterium sibiricum (strain DSM 17290 / CCUG 55495 / CIP 109462 / JCM 13490 / 255-15)).